The sequence spans 491 residues: G2/mitotic-specific cyclin-A (491 aa).

The interval Met-1–Pro-21 is disordered. Residues Asp-206–Cys-332 enclose the Cyclin N-terminal domain.

The protein belongs to the cyclin family. Cyclin AB subfamily. Component of the Frs-CycA-Cdk1 complex composed of CycA, Cdk1 and Z600. Interacts (via C-terminus) with Z600. Interacts with otu and (via C-terminus) with bam; the interaction stabilizes CycA by negatively regulating its ubiquitination. Ubiquitinated. Ubiquitination state is negatively regulated by a deubiquitinase complex made up of bam and otu.

Its function is as follows. Essential for the control of the cell cycle at the G2/M (mitosis) transition. Interacts with the Cdk1 and Cdk2 protein kinases to form MPF. G2/M cyclins accumulate steadily during G2 and are abruptly destroyed at mitosis. This chain is G2/mitotic-specific cyclin-A (CycA), found in Drosophila melanogaster (Fruit fly).